Here is a 460-residue protein sequence, read N- to C-terminus: Mogroside I-E synthase (460 aa).

Histidine 25 (proton acceptor) is an active-site residue. The active-site Charge relay is aspartate 114. UDP-alpha-D-glucose is bound by residues serine 286, cysteine 339, glutamine 341, tryptophan 359, asparagine 360, serine 361, glutamate 364, aspartate 380, and glutamine 381.

Belongs to the UDP-glycosyltransferase family. Highly expressed in young fruits 15 days after anthesis (15-DAA).

The enzyme catalyses mogrol + UDP-alpha-D-glucose = mogroside IE + UDP + H(+). It catalyses the reaction mogroside I-A1 + UDP-alpha-D-glucose = mogroside IIE + UDP + H(+). It carries out the reaction mogroside II-A1 + UDP-alpha-D-glucose = mogroside IIIX + UDP + H(+). The catalysed reaction is mogroside II-A + UDP-alpha-D-glucose = mogroside III + UDP + H(+). The enzyme catalyses mogroside III-A1 + UDP-alpha-D-glucose = siamenoside I + UDP + H(+). The protein operates within secondary metabolite biosynthesis; terpenoid biosynthesis. Functionally, UDP-glycosyltransferase involved in the biosynthesis of cucurbitacin and mogroside tetracyclic triterpene natural products (e.g. siamenoside I and mogrosides IV, V and VI). Cucurbitacins have cytotoxic properties and exhibit deterrent taste as a defense barrier against herbivores. Mogrosides are nonsugar highly oxygenated compounds used as high-intensity zero-calorie sweeteners; they also possess pharmacological properties such as regulating immunity, lowering blood sugar and lipid levels, protecting the liver, and acting as antioxidants and antitumor agents. Catalyzes the C3 primary glucosylation of mogrol, mogroside I-A1, mogroside II-A1, mogroside II-A and mogroside III-A1. The sequence is that of Mogroside I-E synthase from Siraitia grosvenorii (Monk's fruit).